Here is a 570-residue protein sequence, read N- to C-terminus: Alpha-glucosidase (570 aa).

Aspartate 206 acts as the Nucleophile in catalysis. Glutamate 263 acts as the Proton donor in catalysis.

Belongs to the glycosyl hydrolase 13 family.

It carries out the reaction Hydrolysis of terminal, non-reducing (1-&gt;4)-linked alpha-D-glucose residues with release of alpha-D-glucose.. In Candida albicans (Yeast), this protein is Alpha-glucosidase (MAL2).